The following is a 404-amino-acid chain: Methionine aminopeptidase 1D, mitochondrial (404 aa).

The N-terminal 58 residues, 1 to 58, are a transit peptide targeting the mitochondrion; the sequence is MNKILKNIINKSSINNVFKTSFNGGISSSSSSSSSYLNNNNNIIKSYNVQQKQQQRYY. The segment at 86-109 is disordered; the sequence is VRSQRLTKKTASPLEGMNRKERRK. His232 is a binding site for substrate. A divalent metal cation contacts are provided by Asp249, Asp260, and His323. His330 serves as a coordination point for substrate. Positions 355 and 389 each coordinate a divalent metal cation.

Belongs to the peptidase M24A family. Methionine aminopeptidase type 1 subfamily. The cofactor is Co(2+). It depends on Zn(2+) as a cofactor. Mn(2+) serves as cofactor. Requires Fe(2+) as cofactor.

It is found in the mitochondrion. The enzyme catalyses Release of N-terminal amino acids, preferentially methionine, from peptides and arylamides.. Removes the N-terminal methionine from nascent proteins. The N-terminal methionine is often cleaved when the second residue in the primary sequence is small and uncharged (Met-Ala-, Cys, Gly, Pro, Ser, Thr, or Val). The chain is Methionine aminopeptidase 1D, mitochondrial (metap1d) from Dictyostelium discoideum (Social amoeba).